The following is a 210-amino-acid chain: Ribosomal RNA small subunit methyltransferase G (210 aa).

Residues glycine 77, phenylalanine 82, glutamate 100 to serine 102, valine 128 to glutamate 129, and arginine 141 contribute to the S-adenosyl-L-methionine site.

The protein belongs to the methyltransferase superfamily. RNA methyltransferase RsmG family.

The protein resides in the cytoplasm. Specifically methylates the N7 position of a guanine in 16S rRNA. This Borrelia duttonii (strain Ly) protein is Ribosomal RNA small subunit methyltransferase G.